Here is a 179-residue protein sequence, read N- to C-terminus: UPF0227 protein VIBHAR_01524 (179 aa).

It belongs to the UPF0227 family.

The chain is UPF0227 protein VIBHAR_01524 from Vibrio campbellii (strain ATCC BAA-1116).